The sequence spans 693 residues: G1/S-specific cyclin CCN1 (693 aa).

A compositionally biased stretch (polar residues) spans 273-298; it reads QKKQKKALSSNSSRTTTASYTHQNQS. 4 disordered regions span residues 273–320, 465–571, 595–615, and 662–693; these read QKKQ…EDDD, DEDE…PPGS, SNSS…EKRY, and NNTN…QYHQ. Acidic residues-rich tracts occupy residues 306 to 320 and 465 to 476; these read DEDI…EDDD and DEDENVSTDDEA. Composition is skewed to polar residues over residues 489–516 and 524–563; these read DGNN…NHPQ and PSAT…SSFA. The span at 666 to 685 shows a compositional bias: low complexity; the sequence is SSSPLMNQQQQQQVTQSSLY.

The protein belongs to the cyclin family. In terms of assembly, interacts with CDC28. The CDC28-CCN1 complex associates with septin CDC11 upon hyphal induction.

Its function is as follows. G1/S-specific cyclin essential for the control of the cell cycle at the G1/S (start) transition and for maintenance of filamentous growth. Through binding to CDC28 controls the phosphorylation of CDC11 and SEC2 upon induction of filamentous growth. The protein is G1/S-specific cyclin CCN1 (CCN1) of Candida albicans (strain SC5314 / ATCC MYA-2876) (Yeast).